Consider the following 128-residue polypeptide: Sulfurtransferase TusD (128 aa).

Cysteine 78 functions as the Cysteine persulfide intermediate in the catalytic mechanism.

Belongs to the DsrE/TusD family. In terms of assembly, heterohexamer, formed by a dimer of trimers. The hexameric TusBCD complex contains 2 copies each of TusB, TusC and TusD. The TusBCD complex interacts with TusE.

Its subcellular location is the cytoplasm. Functionally, part of a sulfur-relay system required for 2-thiolation of 5-methylaminomethyl-2-thiouridine (mnm(5)s(2)U) at tRNA wobble positions. Accepts sulfur from TusA and transfers it in turn to TusE. The protein is Sulfurtransferase TusD of Enterobacter sp. (strain 638).